Reading from the N-terminus, the 429-residue chain is Glutamate-1-semialdehyde 2,1-aminomutase 1 (429 aa).

At Lys-268 the chain carries N6-(pyridoxal phosphate)lysine.

This sequence belongs to the class-III pyridoxal-phosphate-dependent aminotransferase family. HemL subfamily. Homodimer. Pyridoxal 5'-phosphate is required as a cofactor.

It localises to the cytoplasm. The enzyme catalyses (S)-4-amino-5-oxopentanoate = 5-aminolevulinate. Its pathway is porphyrin-containing compound metabolism; protoporphyrin-IX biosynthesis; 5-aminolevulinate from L-glutamyl-tRNA(Glu): step 2/2. The polypeptide is Glutamate-1-semialdehyde 2,1-aminomutase 1 (Listeria monocytogenes serotype 4b (strain F2365)).